Here is a 240-residue protein sequence, read N- to C-terminus: MSLEPVYKRVLLKASGEALMGGQGFGIDVTVADRIASDIAEARHMGVEVGVVVGGGNIFRGVAVASKGGDRVTGDHMGMLGTIINALALATSLRKLNIDTVVLSAISMPEICESFSQRATLYHLSMGRVVIFAGGTGNPFFTTDSAAALRAAEMGAEAIFKGTQVDGIYTADPKKYPDATRLDRLTHQEVLDRGLAVMDVAAVALARENSIPIIVFSIHEKGGFAEILTGGGLKTIVSDN.

13–16 is an ATP binding site; sequence KASG. Residues 21–26 are involved in allosteric activation by GTP; sequence GGQGFG. Residue G55 coordinates UMP. 2 residues coordinate ATP: G56 and R60. Residues D75 and 136 to 143 contribute to the UMP site; that span reads TGNPFFTT. Positions 163, 164, 169, and 172 each coordinate ATP.

Belongs to the UMP kinase family. Homohexamer.

Its subcellular location is the cytoplasm. It carries out the reaction UMP + ATP = UDP + ADP. It functions in the pathway pyrimidine metabolism; CTP biosynthesis via de novo pathway; UDP from UMP (UMPK route): step 1/1. With respect to regulation, allosterically activated by GTP. Inhibited by UTP. Functionally, catalyzes the reversible phosphorylation of UMP to UDP. This is Uridylate kinase from Rhizobium johnstonii (strain DSM 114642 / LMG 32736 / 3841) (Rhizobium leguminosarum bv. viciae).